The following is a 181-amino-acid chain: Acireductone dioxygenase (181 aa).

Positions 97, 99, 103, and 141 each coordinate Fe(2+). H97, H99, E103, and H141 together coordinate Ni(2+).

This sequence belongs to the acireductone dioxygenase (ARD) family. As to quaternary structure, monomer. Fe(2+) is required as a cofactor. Requires Ni(2+) as cofactor.

It carries out the reaction 1,2-dihydroxy-5-(methylsulfanyl)pent-1-en-3-one + O2 = 3-(methylsulfanyl)propanoate + CO + formate + 2 H(+). It catalyses the reaction 1,2-dihydroxy-5-(methylsulfanyl)pent-1-en-3-one + O2 = 4-methylsulfanyl-2-oxobutanoate + formate + 2 H(+). It participates in amino-acid biosynthesis; L-methionine biosynthesis via salvage pathway; L-methionine from S-methyl-5-thio-alpha-D-ribose 1-phosphate: step 5/6. Functionally, catalyzes 2 different reactions between oxygen and the acireductone 1,2-dihydroxy-3-keto-5-methylthiopentene (DHK-MTPene) depending upon the metal bound in the active site. Fe-containing acireductone dioxygenase (Fe-ARD) produces formate and 2-keto-4-methylthiobutyrate (KMTB), the alpha-ketoacid precursor of methionine in the methionine recycle pathway. Ni-containing acireductone dioxygenase (Ni-ARD) produces methylthiopropionate, carbon monoxide and formate, and does not lie on the methionine recycle pathway. This chain is Acireductone dioxygenase, found in Stutzerimonas stutzeri (strain A1501) (Pseudomonas stutzeri).